A 763-amino-acid chain; its full sequence is 5-methyltetrahydropteroyltriglutamate--homocysteine methyltransferase (763 aa).

Residues 16 to 19 (RELK) and lysine 121 each bind 5-methyltetrahydropteroyltri-L-glutamate. Residues 440–442 (IGS) and glutamate 493 contribute to the L-homocysteine site. L-methionine-binding positions include 440-442 (IGS) and glutamate 493. 5-methyltetrahydropteroyltri-L-glutamate contacts are provided by residues 524-525 (RC) and tryptophan 570. Aspartate 608 contacts L-homocysteine. Position 608 (aspartate 608) interacts with L-methionine. Residue glutamate 614 participates in 5-methyltetrahydropteroyltri-L-glutamate binding. Zn(2+)-binding residues include histidine 650, cysteine 652, and glutamate 674. Residue histidine 703 is the Proton donor of the active site. Zn(2+) is bound at residue cysteine 735.

It belongs to the vitamin-B12 independent methionine synthase family. Zn(2+) serves as cofactor.

The enzyme catalyses 5-methyltetrahydropteroyltri-L-glutamate + L-homocysteine = tetrahydropteroyltri-L-glutamate + L-methionine. It functions in the pathway amino-acid biosynthesis; L-methionine biosynthesis via de novo pathway; L-methionine from L-homocysteine (MetE route): step 1/1. Functionally, catalyzes the transfer of a methyl group from 5-methyltetrahydrofolate to homocysteine resulting in methionine formation. The sequence is that of 5-methyltetrahydropteroyltriglutamate--homocysteine methyltransferase from Paraburkholderia phymatum (strain DSM 17167 / CIP 108236 / LMG 21445 / STM815) (Burkholderia phymatum).